The chain runs to 668 residues: Phosphoglycerate transport system sensor protein PgtB (668 aa).

The next 2 helical transmembrane spans lie at 20–40 (GAFLTGALLTLIVSMVSLYSW) and 342–362 (LILVATLLALLLAWGLNHYFI). The HAMP domain maps to 364-416 (SRLVKRFTALNQAVVQIGLGRTDSTIPVYGRDELGRIARLLRHTLGQLNMQRR). The 210-residue stretch at 454–663 (TLAHEINQPL…CVVLQFSVTD (210 aa)) folds into the Histidine kinase domain. H457 is subject to Phosphohistidine; by autocatalysis.

It localises to the cell inner membrane. It catalyses the reaction ATP + protein L-histidine = ADP + protein N-phospho-L-histidine.. Its function is as follows. Member of the two-component regulatory system PgtB/PgtA that regulates the inducible phosphoglycerate transport system. Activates PgtA by phosphorylation. The sequence is that of Phosphoglycerate transport system sensor protein PgtB (pgtB) from Salmonella typhimurium (strain LT2 / SGSC1412 / ATCC 700720).